The primary structure comprises 584 residues: 65 kDa protein (584 aa).

Residues 459 to 548 (YDLYIAESAI…TKKVENWLPP (90 aa)) enclose the Toprim domain.

The polypeptide is 65 kDa protein (Zymomonas mobilis subsp. mobilis (strain ATCC 10988 / DSM 424 / LMG 404 / NCIMB 8938 / NRRL B-806 / ZM1)).